Consider the following 1842-residue polypeptide: MDSETIDMCVKFLKISFGLQSLKNLVKELFGGSELEKLAYVHAAFFHANEMAIHWNADLPWEEVMSSKRIKERFGYVKSHFLRNVVYNADASGQMIRYNTTTCEQWFCCNFNLASYSASYNSLVPEEGGSMPINEEAEIKIGQSLLTCAQSVTKAIYAKLSTLTTRSIQGFLECLRDAICGAFSSWLPCIRGAFAWFGNIIEVLKHWAGAAHEKLHNFLEGIEECLYMGLGLVASTCIVALIEKFLVTMSVISGPCGRPTLFLTSAMAIISSTYLLSKAVEKSSAFTMLLGFVTQSCQTVLGSLFGKSAKGSEEAQGQFGPSAMLESLATLVSSWSSSSVTEIGRTFGAISQIKNGIIALKDMALFVFSKLCEMASKVLGFESQILADLSIILGENVADWLDECDCMLAYLLEFNSNARDIFDRLSQLIEKGKAIRMGILRTTHRGPSQVLSLVTKALDKLTELHNSVIMSGANSTRKTPFMLFFTGKSGVGKTSVVQRMAANWLQQEQLGSNEVYSRNGLDPFWSGYKRQAVVTYDDFGAVPGSVSNEAEIINVVSSNPHSVMMADLKEKGMYFDSRLIIASSNFLAANPESGVHDSEAYERRRHVVVQVSLKEDMAYDPGNPCANQRYTLLESKAPFAEKAVFESYEELWSHVYNAFKAHEEKEKLFLSSLPIPERSEKEALQALIGICVMTTSYAPKAVIQYGIDHLVGYHYLISSAEHVYFWHEKGEVEIVPMHLMKLDKMDKATMASTSLKSALMCQDMAKNFPTLNPLAVLYAKNIVIRGWVDANLQASKKCEDSYMREQIESLPKWQRAYLHVLSGHIASNETRGWFLNCLEVTKSNSRSSYIWEYKSWPMPLKLALGSFLAILAGSAIFCSLQSLWSISGNASFVAGAASIFTIGSATAQSAPPNKDGSEYTYRNKKIKIRNWEGQGPCFGDSALWIAENCMATLVVMKDRVQVCMAPGRSFLGVNHFLRMIPNGVMVKLETGMTETYFVWEKSKLKLFENSEIALYTSSNLPKAPDSLVDRFHFDLETLPKTFPAQFFTYKFDKDMQQYVPELGELLCKKAERALCVVSGEYRRVISHHLTYRNPTVAGDCGGLVLAIIEGKCKLVGLHVASDGEEGAASPVPWDPDFKVAQGQSDFLLSYDEWAVPKVLGPGCKAVGIISPEHTVGSGGKTSFLETPIEWQLNRPCGKIPSILVKGDVRLAGTENADYDPFAVGMTKYAKEAGPFEPNGLDRVCESIAETWHDASDGFEFGPVDLEAALNGIENMEYFDALVLSTSEGYPYRLDRKPGEKGKARYVEGEPGNLEITDERILADIHWFEEISKTQVPDLYCIECVKDERLPVRKVIKEPKSRLFTVLPMSYNLAIRKKFLNFVRFIMKRRDVLPCQVGINPYSRQWGKVADRLLEKGNSILCCDYSRFDGFLPKCIMVKIAEMFSNIVGETGAEREQTKNLMLACCSRYAICGRVLYRVENGIPSGFPLTVIVNSILNEILIKYAYWKCFETESLIRDHFDTYVAMVVYGDDNLISVSEAISSKFNGNFLVNFMCNLGIKVTDGVDKTKVGIEFRTIEDCDFLKRKFKENADGTWSGVMAEEHLWPQLHFVKAKKVEMSEAYISNCNNILRELWLGSPEKAAAFRREVISKLKWVEPQRLLTISQVALFHNEQMNGEHPFVEACHQLENLELMAPLEPGMLPIKTQEIMPGLFVASEKNFTGNFDDYFTISITTNRKFEDGKGFQIIFPYGAGRGGLPSKAFMEQNVIRKGCAIQKAFKQGLEKGNKMLFISQSSVIPAYVFAIMLYRSVDRLPRALSNKALTSALGICKKLSYLPKDFPDLF.

The SF3 helicase domain maps to 458–626 (LDKLTELHNS…MAYDPGNPCA (169 aa)). Residue 487–494 (GKSGVGKT) participates in ATP binding. Residues 883-903 (LWSISGNASFVAGAASIFTIG) traverse the membrane as a helical segment. O-(5'-phospho-RNA)-serine is present on S909. In terms of domain architecture, Peptidase C3 spans 935-1137 (GPCFGDSALW…ASPVPWDPDF (203 aa)). Catalysis depends on for picornain 3C-like protease activity residues H975, E1011, and C1100. The 128-residue stretch at 1417 to 1544 (NSILCCDYSR…SVSEAISSKF (128 aa)) folds into the RdRp catalytic domain.

Specific enzymatic cleavages by picornain 3C-like protease in vivo yield mature proteins. Picornain 3C-like protease is autocatalytically processed. In terms of processing, uridylylated by the polymerase and is covalently linked to the 5'-end of genomic RNA. This uridylylated form acts as a nucleotide-peptide primer for the polymerase.

Its subcellular location is the host membrane. It is found in the host cytoplasm. It localises to the host perinuclear region. The protein resides in the host endoplasmic reticulum. It catalyses the reaction RNA(n) + a ribonucleoside 5'-triphosphate = RNA(n+1) + diphosphate. In terms of biological role, thiol protease that cleaves the RNA1 and RNA2 polyproteins. Its function is as follows. Plays a role in RNA replication. It is covalently linked to the 5'terminus of both viral single-stranded RNA1 and RNA2 molecules. Down-regulates the RNA1 polyprotein processing and enhances trans-cleavage of RNA2 polyproteins. The protease cofactor and the putative helicase seem to target the replication complexes to ER membranes. Their physical association causes the membrane rearrangement of host ER that may result in formation of the small membranous vesicles that are the site of viral RNA synthesis. Functionally, the protease cofactor and the putative helicase seem to target the replication complexes to ER membranes. Their physical association causes the membrane rearrangement of host ER that may result in formation of the small membranous vesicles that are the site of viral RNA synthesis. In terms of biological role, replicates the viral genome. The chain is RNA1 polyprotein (RNA1) from Capsicum annuum (Capsicum pepper).